The primary structure comprises 392 residues: Small ribosomal subunit protein bS1 (392 aa).

S1 motif domains lie at 16–90, 108–173, 194–262, and 279–348; these read GDKV…LSKR, DEVI…LSRK, GDVI…LSIK, and DDVI…LSIK. The interval 361–380 is disordered; the sequence is ASTTQSYLEDDNDEDKPTLG.

Belongs to the bacterial ribosomal protein bS1 family.

Functionally, binds mRNA; thus facilitating recognition of the initiation point. It is needed to translate mRNA with a short Shine-Dalgarno (SD) purine-rich sequence. This is Small ribosomal subunit protein bS1 (rpsA) from Staphylococcus epidermidis (strain ATCC 35984 / DSM 28319 / BCRC 17069 / CCUG 31568 / BM 3577 / RP62A).